The following is a 331-amino-acid chain: Ferredoxin--NADP reductase 2 (331 aa).

Residues glutamate 37, glutamine 45, tyrosine 50, valine 90, phenylalanine 124, aspartate 285, and threonine 326 each coordinate FAD.

It belongs to the ferredoxin--NADP reductase type 2 family. Homodimer. Requires FAD as cofactor.

It carries out the reaction 2 reduced [2Fe-2S]-[ferredoxin] + NADP(+) + H(+) = 2 oxidized [2Fe-2S]-[ferredoxin] + NADPH. The polypeptide is Ferredoxin--NADP reductase 2 (Bacillus velezensis (strain DSM 23117 / BGSC 10A6 / LMG 26770 / FZB42) (Bacillus amyloliquefaciens subsp. plantarum)).